The primary structure comprises 105 residues: Sulfite reductase, dissimilatory-type subunit gamma (105 aa).

This sequence belongs to the DsrC/TusE family. Heterohexamer of two alpha, two beta and two gamma subunits.

It is found in the cytoplasm. The catalysed reaction is [DsrC protein]-trisulfide + NAD(+) + 3 H2O = [DsrC protein]-dithiol + sulfite + NADH + 3 H(+). Functionally, catalyzes the reduction of sulfite to sulfide. This is the terminal oxidation reaction in sulfate respiration, a process catalyzed by the sulfate-reducing bacteria. The polypeptide is Sulfite reductase, dissimilatory-type subunit gamma (dsvC) (Nitratidesulfovibrio vulgaris (strain ATCC 29579 / DSM 644 / CCUG 34227 / NCIMB 8303 / VKM B-1760 / Hildenborough) (Desulfovibrio vulgaris)).